Here is a 348-residue protein sequence, read N- to C-terminus: Ion-translocating oxidoreductase complex subunit D (348 aa).

Transmembrane regions (helical) follow at residues 15–35, 36–56, 67–87, 88–108, and 125–145; these read LTAK…GMQA, YFFG…AVAI, PTAF…LAIS, IPPY…LLLA, and VAYA…LVPI. Thr-186 is subject to FMN phosphoryl threonine. Helical transmembrane passes span 212–232, 241–261, 265–285, 298–318, and 320–340; these read LFAN…LLLI, IPAA…LLLP, LNVV…FIAT, LIFG…GNYP, and AVAF…HYTQ.

It belongs to the NqrB/RnfD family. In terms of assembly, the complex is composed of six subunits: RnfA, RnfB, RnfC, RnfD, RnfE and RnfG. The cofactor is FMN.

Its subcellular location is the cell inner membrane. In terms of biological role, part of a membrane-bound complex that couples electron transfer with translocation of ions across the membrane. In Actinobacillus pleuropneumoniae serotype 5b (strain L20), this protein is Ion-translocating oxidoreductase complex subunit D.